Reading from the N-terminus, the 139-residue chain is Large ribosomal subunit protein uL16 (139 aa).

Positions 1–17 (MLIPRKVKHRKQHHPGR) are enriched in basic residues. The interval 1–24 (MLIPRKVKHRKQHHPGRTGHATGG) is disordered.

It belongs to the universal ribosomal protein uL16 family. As to quaternary structure, part of the 50S ribosomal subunit.

In terms of biological role, binds 23S rRNA and is also seen to make contacts with the A and possibly P site tRNAs. This is Large ribosomal subunit protein uL16 from Clavibacter michiganensis subsp. michiganensis (strain NCPPB 382).